Consider the following 485-residue polypeptide: E3 ubiquitin-protein ligase RNF14 (485 aa).

One can recognise an RWD domain in the interval 11-137; the sequence is DELLALASIY…QFLKEETLTY (127 aa). Positions 37-45 match the D-box motif; that stretch reads RIYLDLPQN. The TRIAD supradomain stretch occupies residues 217 to 458; it reads KLFLCSICFC…DSESPCFNRL (242 aa). C221, C224, C239, H241, C244, C247, C266, C271, C310, C315, C330, C333, C338, C341, and H346 together coordinate Zn(2+). The RING-type 1 zinc-finger motif lies at 221-271; it reads CSICFCEKLGSDCMYFLECKHVYCKACLKDYFEIQIKDGQVKCLNCPEPQC. The IBR-type zinc-finger motif lies at 290–351; the sequence is ARYDRLLLQS…RLTYHGLSPC (62 aa). A Phosphoserine modification is found at S349. Positions 351, 405, and 408 each coordinate Zn(2+). Residues 405–434 form an RING-type 2; atypical zinc finger; sequence CPCCGTPIQKLDGCNKMTCTGCMQYFCWIC. C418 is an active-site residue. 6 residues coordinate Zn(2+): C423, C426, C431, C434, H446, and C454.

This sequence belongs to the RBR family. RNF14 subfamily. In terms of assembly, interacts with GCN1; interaction takes place in response to ribosome collisions and is required for ubiquitination of EEF1A1/eEF1A. Interacts with the ubiquitin-conjugating enzymes UBE2E1 and UBE2E2. Interacts with AR/androgen receptor. Interacts with TCF7/TCF1, TCF7L1/TCF3 and TCF7L2/TCF4; promoting Wnt signaling. RING-type zinc finger-dependent and UBE2E2-dependent autoubiquitination.

The protein localises to the cytoplasm. The protein resides in the nucleus. The catalysed reaction is [E2 ubiquitin-conjugating enzyme]-S-ubiquitinyl-L-cysteine + [acceptor protein]-L-lysine = [E2 ubiquitin-conjugating enzyme]-L-cysteine + [acceptor protein]-N(6)-ubiquitinyl-L-lysine.. It functions in the pathway protein modification; protein ubiquitination. Its function is as follows. E3 ubiquitin-protein ligase that plays a key role in the RNF14-RNF25 translation quality control pathway, a pathway that takes place when a ribosome has stalled during translation, and which promotes ubiquitination and degradation of translation factors on stalled ribosomes. Recruited to stalled ribosomes by the ribosome collision sensor GCN1 and mediates 'Lys-6'-linked ubiquitination of target proteins, leading to their degradation. Mediates ubiquitination of EEF1A1/eEF1A and ETF1/eRF1 translation factors on stalled ribosomes, leading to their degradation. Also catalyzes ubiquitination of ribosomal proteins RPL0, RPL1, RPL12, RPS13 and RPS17. Specifically required to resolve RNA-protein cross-links caused by reactive aldehydes, which trigger translation stress by stalling ribosomes: acts by catalying 'Lys-6'-linked ubiquitination of RNA-protein cross-links, leading to their removal by the ATP-dependent unfoldase VCP and subsequent degradation by the proteasome. Independently of its function in the response to stalled ribosomes, acts as a regulator of transcription in Wnt signaling via its interaction with TCF transcription factors (TCF7/TCF1, TCF7L1/TCF3 and TCF7L2/TCF4). May also play a role as a coactivator for androgen- and, to a lesser extent, progesterone-dependent transcription. The polypeptide is E3 ubiquitin-protein ligase RNF14 (Mus musculus (Mouse)).